The chain runs to 375 residues: S-(hydroxymethyl)glutathione dehydrogenase (375 aa).

C40 contacts Zn(2+). An NAD(+)-binding site is contributed by H41. The Zn(2+) site is built by H62, E63, C92, C95, C98, C106, and C170. Residues 195 to 200 (GLGGIG), D219, 293 to 295 (IGV), and 318 to 320 (TAF) contribute to the NAD(+) site.

This sequence belongs to the zinc-containing alcohol dehydrogenase family. Class-III subfamily. In terms of assembly, homotetramer. Zn(2+) is required as a cofactor.

It carries out the reaction a primary alcohol + NAD(+) = an aldehyde + NADH + H(+). The catalysed reaction is a secondary alcohol + NAD(+) = a ketone + NADH + H(+). The enzyme catalyses S-(hydroxymethyl)glutathione + NADP(+) = S-formylglutathione + NADPH + H(+). It catalyses the reaction S-(hydroxymethyl)glutathione + NAD(+) = S-formylglutathione + NADH + H(+). It carries out the reaction S-nitrosoglutathione + NADH + H(+) = S-(hydroxysulfenamide)glutathione + NAD(+). Oxidizes long-chain alcohols and, in the presence of glutathione, is able to oxidize formaldehyde. Also acts as a S-nitroso-glutathione reductase by catalyzing the NADH-dependent reduction of S-nitrosoglutathione, thereby regulating protein S-nitrosylation. This Paracoccus denitrificans protein is S-(hydroxymethyl)glutathione dehydrogenase (flhA).